The following is a 266-amino-acid chain: Glucosamine-6-phosphate deaminase (266 aa).

The active-site Proton acceptor; for enolization step is D72. D141 (for ring-opening step) is an active-site residue. H143 (proton acceptor; for ring-opening step) is an active-site residue. Residue E148 is the For ring-opening step of the active site.

The protein belongs to the glucosamine/galactosamine-6-phosphate isomerase family. NagB subfamily. Homohexamer.

It catalyses the reaction alpha-D-glucosamine 6-phosphate + H2O = beta-D-fructose 6-phosphate + NH4(+). Its pathway is amino-sugar metabolism; N-acetylneuraminate degradation; D-fructose 6-phosphate from N-acetylneuraminate: step 5/5. Its activity is regulated as follows. Allosterically activated by N-acetylglucosamine 6-phosphate (GlcNAc6P). Catalyzes the reversible isomerization-deamination of glucosamine 6-phosphate (GlcN6P) to form fructose 6-phosphate (Fru6P) and ammonium ion. This is Glucosamine-6-phosphate deaminase from Yersinia pseudotuberculosis serotype O:1b (strain IP 31758).